A 508-amino-acid chain; its full sequence is DNA-directed RNA polymerase subunit Rpo1C (508 aa).

The tract at residues 1 to 123 is unknown; sequence MASLLWRDTS…EIKEKYGENL (123 aa). A DNA-directed RNA polymerase subunit Rpo1C region spans residues 124-508; it reads SEDVQKVLDD…IYKGYPKTKK (385 aa).

It belongs to the RNA polymerase beta' chain family. In terms of assembly, part of the RNA polymerase complex.

The protein localises to the cytoplasm. The enzyme catalyses RNA(n) + a ribonucleoside 5'-triphosphate = RNA(n+1) + diphosphate. In terms of biological role, DNA-dependent RNA polymerase (RNAP) catalyzes the transcription of DNA into RNA using the four ribonucleoside triphosphates as substrates. Forms part of the jaw domain. The sequence is that of DNA-directed RNA polymerase subunit Rpo1C from Thermoplasma acidophilum (strain ATCC 25905 / DSM 1728 / JCM 9062 / NBRC 15155 / AMRC-C165).